We begin with the raw amino-acid sequence, 174 residues long: Inactive signal peptidase IA (174 aa).

The Cytoplasmic segment spans residues Met1–Tyr7. A helical membrane pass occupies residues Leu8 to Gly28. At His29–Ser174 the chain is on the extracellular side.

It belongs to the peptidase S26 family.

The protein localises to the cell membrane. Functionally, catalytically inactive. In Staphylococcus aureus (strain MRSA252), this protein is Inactive signal peptidase IA (spsA).